The sequence spans 640 residues: 1,4-alpha-glucan branching enzyme GlgB (640 aa).

Asp318 serves as the catalytic Nucleophile. Residue Glu371 is the Proton donor of the active site.

It belongs to the glycosyl hydrolase 13 family. GlgB subfamily. In terms of assembly, monomer.

It carries out the reaction Transfers a segment of a (1-&gt;4)-alpha-D-glucan chain to a primary hydroxy group in a similar glucan chain.. The protein operates within glycan biosynthesis; glycogen biosynthesis. Functionally, catalyzes the formation of the alpha-1,6-glucosidic linkages in glycogen by scission of a 1,4-alpha-linked oligosaccharide from growing alpha-1,4-glucan chains and the subsequent attachment of the oligosaccharide to the alpha-1,6 position. The protein is 1,4-alpha-glucan branching enzyme GlgB of Francisella tularensis subsp. tularensis (strain FSC 198).